The sequence spans 485 residues: Adenylate kinase 8 (485 aa).

Adenylate kinase regions lie at residues 58-258 (PRVF…TFVL) and 269-472 (PRIL…YTVS). 67 to 72 (ASGKHT) serves as a coordination point for ATP. The NMP 1 stretch occupies residues 87-113 (TPESVLSSDVSLLAKEAQSYRDKGQEV). AMP is bound by residues 140-143 (GFPK) and Gln-147. Positions 177–206 (GKRIDTANGEVYHTTFDWPSDPTVQRNLVE) are LID 1. Arg-218 is an AMP binding site. Residue 278–283 (GSGRSL) coordinates ATP. Residues 298–327 (CCGQVLKEAVADQTKLGEVIQPYIENDQQV) are NMP 2. Residues 325-327 (QQV), 354-357 (GFPR), and Gln-361 each bind AMP. Residues 391 to 424 (LCMTDPVSGERYHDIYKPAPSSEVHERLQQNPRH) form an LID 2 region. Arg-432 is a binding site for AMP.

Belongs to the adenylate kinase family.

The protein resides in the cytoplasm. It is found in the cytosol. The catalysed reaction is AMP + ATP = 2 ADP. It catalyses the reaction a 2'-deoxyribonucleoside 5'-diphosphate + ATP = a 2'-deoxyribonucleoside 5'-triphosphate + ADP. It carries out the reaction a ribonucleoside 5'-diphosphate + ATP = a ribonucleoside 5'-triphosphate + ADP. Its function is as follows. Nucleoside monophosphate (NMP) kinase that catalyzes the reversible transfer of the terminal phosphate group between nucleoside triphosphates and monophosphates. Has highest activity toward AMP, and weaker activity toward dAMP, CMP and dCMP. Also displays broad nucleoside diphosphate kinase activity. This Xenopus tropicalis (Western clawed frog) protein is Adenylate kinase 8 (ak8).